The primary structure comprises 87 residues: X protein (87 aa).

The tract at residues 5–16 is nuclear export signal; that stretch reads LRLTLLELVRRL. Residues 18–87 form a disordered region; that stretch reads GNATIESGRL…PANRKGAAVE (70 aa). The segment covering 36–48 has biased composition (low complexity); it reads DTTTGTTGVTKTT.

As to quaternary structure, interacts with P and N proteins. These interactions presumably promote nuclear targeting of the X protein in infected cells. Interacts with host MAVS; this interaction inhibits MAVS-induced apoptosis. Post-translationally, phosphorylated.

The protein resides in the host nucleus. It is found in the host mitochondrion. Plays an essential role in the inhibition of host apoptosis. Mediates host mitochondria-mediated apoptosis through interaction with the mitochondrial antiviral signaling protein/MAVS and thereby promotes viral persistence in host central nervous system. Within the host nucleus, regulates viral RNA synthesis and polymerase complex assembly. This is X protein (P/X) from Borna disease virus 1 (BoDV-1).